A 134-amino-acid chain; its full sequence is Large ribosomal subunit protein uL14 (134 aa).

This sequence belongs to the universal ribosomal protein uL14 family. Part of the 50S ribosomal subunit. Forms a cluster with proteins L3 and L19. In the 70S ribosome, L14 and L19 interact and together make contacts with the 16S rRNA in bridges B5 and B8.

Functionally, binds to 23S rRNA. Forms part of two intersubunit bridges in the 70S ribosome. This chain is Large ribosomal subunit protein uL14, found in Deinococcus deserti (strain DSM 17065 / CIP 109153 / LMG 22923 / VCD115).